A 600-amino-acid polypeptide reads, in one-letter code: Proline--tRNA ligase (600 aa).

The protein belongs to the class-II aminoacyl-tRNA synthetase family. ProS type 1 subfamily. As to quaternary structure, homodimer.

The protein resides in the cytoplasm. The catalysed reaction is tRNA(Pro) + L-proline + ATP = L-prolyl-tRNA(Pro) + AMP + diphosphate. Its function is as follows. Catalyzes the attachment of proline to tRNA(Pro) in a two-step reaction: proline is first activated by ATP to form Pro-AMP and then transferred to the acceptor end of tRNA(Pro). As ProRS can inadvertently accommodate and process non-cognate amino acids such as alanine and cysteine, to avoid such errors it has two additional distinct editing activities against alanine. One activity is designated as 'pretransfer' editing and involves the tRNA(Pro)-independent hydrolysis of activated Ala-AMP. The other activity is designated 'posttransfer' editing and involves deacylation of mischarged Ala-tRNA(Pro). The misacylated Cys-tRNA(Pro) is not edited by ProRS. In Prochlorococcus marinus (strain MIT 9215), this protein is Proline--tRNA ligase.